The chain runs to 649 residues: Threonine--tRNA ligase (649 aa).

Residues 1–60 (MHVTLPDGKQLDLQAGATALDVARALGPRLAQDALAALVNGELMDLMTPLPEGAQVRLIT) form the TGS domain. Residues 248 to 544 (DHRKLGRELE…LIEHYGGDFP (297 aa)) are catalytic. Residues cysteine 341, histidine 392, and histidine 521 each contribute to the Zn(2+) site.

It belongs to the class-II aminoacyl-tRNA synthetase family. Homodimer. Requires Zn(2+) as cofactor.

It is found in the cytoplasm. The catalysed reaction is tRNA(Thr) + L-threonine + ATP = L-threonyl-tRNA(Thr) + AMP + diphosphate + H(+). Functionally, catalyzes the attachment of threonine to tRNA(Thr) in a two-step reaction: L-threonine is first activated by ATP to form Thr-AMP and then transferred to the acceptor end of tRNA(Thr). Also edits incorrectly charged L-seryl-tRNA(Thr). The polypeptide is Threonine--tRNA ligase (Deinococcus geothermalis (strain DSM 11300 / CIP 105573 / AG-3a)).